Here is a 424-residue protein sequence, read N- to C-terminus: Histidinol dehydrogenase (424 aa).

Y121, Q183, and N206 together coordinate NAD(+). Residues S229, Q251, and H254 each coordinate substrate. Positions 251 and 254 each coordinate Zn(2+). Active-site proton acceptor residues include E319 and H320. 4 residues coordinate substrate: H320, D353, E407, and H412. D353 contributes to the Zn(2+) binding site. H412 is a Zn(2+) binding site.

Belongs to the histidinol dehydrogenase family. Requires Zn(2+) as cofactor.

The enzyme catalyses L-histidinol + 2 NAD(+) + H2O = L-histidine + 2 NADH + 3 H(+). It functions in the pathway amino-acid biosynthesis; L-histidine biosynthesis; L-histidine from 5-phospho-alpha-D-ribose 1-diphosphate: step 9/9. Functionally, catalyzes the sequential NAD-dependent oxidations of L-histidinol to L-histidinaldehyde and then to L-histidine. This chain is Histidinol dehydrogenase, found in Halalkalibacterium halodurans (strain ATCC BAA-125 / DSM 18197 / FERM 7344 / JCM 9153 / C-125) (Bacillus halodurans).